A 193-amino-acid chain; its full sequence is Fe/S biogenesis protein NfuA (193 aa).

Residues Cys-150 and Cys-153 each contribute to the [4Fe-4S] cluster site.

It belongs to the NfuA family. In terms of assembly, homodimer. Requires [4Fe-4S] cluster as cofactor.

In terms of biological role, involved in iron-sulfur cluster biogenesis. Binds a 4Fe-4S cluster, can transfer this cluster to apoproteins, and thereby intervenes in the maturation of Fe/S proteins. Could also act as a scaffold/chaperone for damaged Fe/S proteins. This is Fe/S biogenesis protein NfuA from Histophilus somni (strain 129Pt) (Haemophilus somnus).